A 349-amino-acid chain; its full sequence is Microfibril-associated glycoprotein 3 (349 aa).

The signal sequence occupies residues 1–21; sequence MKLHHCLSFLLVVTLVPAALS. At 22–139 the chain is on the extracellular side; sequence LEDVAPLGAN…TLRVIFTSGD (118 aa). N-linked (GlcNAc...) asparagine glycans are attached at residues Asn31, Asn36, Asn63, and Asn103. The Ig-like C2-type domain occupies 41–130; sequence PSFELSAGSY…SPARASYSVT (90 aa). The cysteines at positions 68 and 117 are disulfide-linked. Residues 140–160 form a helical membrane-spanning segment; that stretch reads MSVYYMVVCLIAFTITLILNV. Topologically, residues 161–349 are cytoplasmic; it reads TRLCLMSTHL…EGSIHHRVSI (189 aa). Positions 280 to 349 are disordered; the sequence is NPELGRSNSP…EGSIHHRVSI (70 aa). Residues 311 to 331 are compositionally biased toward polar residues; it reads VHLQSETKSIGTDSQDSSHFS.

Post-translationally, glycosylated.

It is found in the cell membrane. Functionally, component of the elastin-associated microfibrils. This Mus musculus (Mouse) protein is Microfibril-associated glycoprotein 3 (Mfap3).